Here is a 232-residue protein sequence, read N- to C-terminus: Beta-casein (232 aa).

An N-terminal signal peptide occupies residues 1 to 15 (MKVLILACRVALALA). A phosphoserine mark is found at Ser30, Ser32, Ser33, and Ser34.

The protein belongs to the beta-casein family. In terms of tissue distribution, mammary gland specific. Secreted in milk.

Its subcellular location is the secreted. Its function is as follows. Important role in determination of the surface properties of the casein micelles. This is Beta-casein (CSN2) from Camelus dromedarius (Dromedary).